The primary structure comprises 218 residues: Ribonuclease T (218 aa).

The Exonuclease domain maps to 20 to 194 (VVIDVETAGF…YDAERTAELF (175 aa)). Residues Asp23, Glu25, His181, and Asp186 each contribute to the Mg(2+) site. Residue His181 is the Proton donor/acceptor of the active site.

Belongs to the RNase T family. In terms of assembly, homodimer. The cofactor is Mg(2+).

In terms of biological role, trims short 3' overhangs of a variety of RNA species, leaving a one or two nucleotide 3' overhang. Responsible for the end-turnover of tRNA: specifically removes the terminal AMP residue from uncharged tRNA (tRNA-C-C-A). Also appears to be involved in tRNA biosynthesis. In Baumannia cicadellinicola subsp. Homalodisca coagulata, this protein is Ribonuclease T.